Reading from the N-terminus, the 436-residue chain is GTPase Der (436 aa).

EngA-type G domains follow at residues 4-167 (PTIA…PEQQ) and 176-351 (IKFS…ENHR). GTP contacts are provided by residues 10–17 (GRANVGKS), 57–61 (DTGGI), 119–122 (NKID), 182–189 (GRPNVGKS), 229–233 (DTAGM), and 294–297 (NKWD). A KH-like domain is found at 352-436 (KRVQSSTLNE…PLHLIARKRN (85 aa)).

The protein belongs to the TRAFAC class TrmE-Era-EngA-EngB-Septin-like GTPase superfamily. EngA (Der) GTPase family. Associates with the 50S ribosomal subunit.

GTPase that plays an essential role in the late steps of ribosome biogenesis. In Macrococcus caseolyticus (strain JCSC5402) (Macrococcoides caseolyticum), this protein is GTPase Der.